Here is a 119-residue protein sequence, read N- to C-terminus: Large ribosomal subunit protein bL20c (119 aa).

This sequence belongs to the bacterial ribosomal protein bL20 family.

The protein resides in the plastid. The protein localises to the chloroplast. Functionally, binds directly to 23S ribosomal RNA and is necessary for the in vitro assembly process of the 50S ribosomal subunit. It is not involved in the protein synthesizing functions of that subunit. This chain is Large ribosomal subunit protein bL20c (rpl20), found in Oryza sativa (Rice).